Here is an 818-residue protein sequence, read N- to C-terminus: Serine/threonine-protein phosphatase 4 regulatory subunit 3 (818 aa).

Positions 1 to 100 (MTDTRRRVKV…DEIWEKICQV (100 aa)) constitute a WH1 domain. Acidic residues predominate over residues 670 to 681 (FNTDEEDLEDGE). Positions 670–818 (FNTDEEDLED…PLSKKSKLSS (149 aa)) are disordered. Residues 703–718 (FMERKKLKDSEEKEVL) show a composition bias toward basic and acidic residues. A compositionally biased stretch (low complexity) spans 729–775 (SPSFKLSFSSSPKASLSSPPTASLHPGSPGSPSSPGTGARSSPPSAA). Phosphoserine occurs at positions 769 and 770. A compositionally biased stretch (acidic residues) spans 788-803 (YPDDDEEDEDEEDADS).

This sequence belongs to the SMEK family. Serine/threonine-protein phosphatase 4 (PP4) occurs in different assemblies of the catalytic and one or more regulatory subunits.

Regulatory subunit of serine/threonine-protein phosphatase 4. This is Serine/threonine-protein phosphatase 4 regulatory subunit 3 (smek1) from Danio rerio (Zebrafish).